The sequence spans 218 residues: Guanylate kinase (218 aa).

Residues 14 to 193 enclose the Guanylate kinase-like domain; it reads GVMLVLSSPS…AFASVRAIVS (180 aa). Residue 21–28 coordinates ATP; sequence SPSGAGKS.

It belongs to the guanylate kinase family.

The protein localises to the cytoplasm. It carries out the reaction GMP + ATP = GDP + ADP. Essential for recycling GMP and indirectly, cGMP. The protein is Guanylate kinase of Chelativorans sp. (strain BNC1).